Consider the following 375-residue polypeptide: Anhydro-N-acetylmuramic acid kinase (375 aa).

13-20 serves as a coordination point for ATP; it reads GTSMDGVD.

The protein belongs to the anhydro-N-acetylmuramic acid kinase family.

It catalyses the reaction 1,6-anhydro-N-acetyl-beta-muramate + ATP + H2O = N-acetyl-D-muramate 6-phosphate + ADP + H(+). The protein operates within amino-sugar metabolism; 1,6-anhydro-N-acetylmuramate degradation. It functions in the pathway cell wall biogenesis; peptidoglycan recycling. Functionally, catalyzes the specific phosphorylation of 1,6-anhydro-N-acetylmuramic acid (anhMurNAc) with the simultaneous cleavage of the 1,6-anhydro ring, generating MurNAc-6-P. Is required for the utilization of anhMurNAc either imported from the medium or derived from its own cell wall murein, and thus plays a role in cell wall recycling. This chain is Anhydro-N-acetylmuramic acid kinase, found in Pelagibacter ubique (strain HTCC1062).